A 378-amino-acid polypeptide reads, in one-letter code: Carbamoyl phosphate synthase small chain (378 aa).

The CPSase stretch occupies residues 1–189 (MTKPAILALA…DSHPTIDAAD (189 aa)). L-glutamine-binding residues include serine 47, glycine 241, and glycine 243. One can recognise a Glutamine amidotransferase type-1 domain in the interval 193–378 (HVVAFDYGVK…RFTDAMAKRR (186 aa)). Cysteine 269 (nucleophile) is an active-site residue. Residues leucine 270, glutamine 273, asparagine 311, glycine 313, and phenylalanine 314 each coordinate L-glutamine. Residues histidine 353 and glutamate 355 contribute to the active site.

This sequence belongs to the CarA family. As to quaternary structure, composed of two chains; the small (or glutamine) chain promotes the hydrolysis of glutamine to ammonia, which is used by the large (or ammonia) chain to synthesize carbamoyl phosphate. Tetramer of heterodimers (alpha,beta)4.

It catalyses the reaction hydrogencarbonate + L-glutamine + 2 ATP + H2O = carbamoyl phosphate + L-glutamate + 2 ADP + phosphate + 2 H(+). The enzyme catalyses L-glutamine + H2O = L-glutamate + NH4(+). Its pathway is amino-acid biosynthesis; L-arginine biosynthesis; carbamoyl phosphate from bicarbonate: step 1/1. It participates in pyrimidine metabolism; UMP biosynthesis via de novo pathway; (S)-dihydroorotate from bicarbonate: step 1/3. In terms of biological role, small subunit of the glutamine-dependent carbamoyl phosphate synthetase (CPSase). CPSase catalyzes the formation of carbamoyl phosphate from the ammonia moiety of glutamine, carbonate, and phosphate donated by ATP, constituting the first step of 2 biosynthetic pathways, one leading to arginine and/or urea and the other to pyrimidine nucleotides. The small subunit (glutamine amidotransferase) binds and cleaves glutamine to supply the large subunit with the substrate ammonia. This is Carbamoyl phosphate synthase small chain from Pseudomonas putida (strain ATCC 47054 / DSM 6125 / CFBP 8728 / NCIMB 11950 / KT2440).